Here is an 867-residue protein sequence, read N- to C-terminus: G-protein coupled receptor family C group 6 member A (867 aa).

The N-terminal stretch at 1-19 (MDLMSFILLWAGLMKVAEA) is a signal peptide. At 20–566 (SIAQFSQLGA…EYFDWNSGFA (547 aa)) the chain is on the extracellular side. N-linked (GlcNAc...) asparagine glycans are attached at residues N51, N55, N97, N296, N308, N336, N356, N370, N527, and N547. Residues 567–587 (IVLLILAALGVLLLFFMSALF) traverse the membrane as a helical segment. Topologically, residues 588 to 602 (FWQRHSPVVKAAGGP) are cytoplasmic. Residues 603-623 (LCHLILVSLLGSFISVVFFVG) traverse the membrane as a helical segment. The Extracellular segment spans residues 624–634 (EPSDLTCRARQ). The chain crosses the membrane as a helical span at residues 635–655 (VIFGFSFTLCVSCILVKSLKI). Residues 656–675 (LLAFEMNFELKELLCMLYKP) lie on the Cytoplasmic side of the membrane. Residues 676-696 (YMIVSVGMGVQIIICTVWLTL) form a helical membrane-spanning segment. Residues 697–716 (YKPFKDKEVQTESILLECNE) lie on the Extracellular side of the membrane. The helical transmembrane segment at 717-737 (GFYVMFWLMLGYIALLALFCF) threads the bilayer. At 738-754 (TFAYIGRKLPQKYNEAK) the chain is on the cytoplasmic side. The helical transmembrane segment at 755 to 775 (FITFSMVICLMAWIIFIPIHV) threads the bilayer. Over 776 to 781 (TTSGKY) the chain is Extracellular. A helical membrane pass occupies residues 782–802 (VPAVEMVVILISNYGILSCHF). Topologically, residues 803-867 (LPKSYIILFK…LSFVPEEKHE (65 aa)) are cytoplasmic.

The protein belongs to the G-protein coupled receptor 3 family. Homodimer; disulfide-linked.

Its subcellular location is the cell membrane. Olfactory receptor that is activated by amino acids that act as potent odorants in fish. Displays preference for acidic amino acids such as Glu over basic amino acids. In Danio rerio (Zebrafish), this protein is G-protein coupled receptor family C group 6 member A (gprc6a).